The chain runs to 485 residues: Glycogen synthase (485 aa).

Residue Lys15 coordinates ADP-alpha-D-glucose.

The protein belongs to the glycosyltransferase 1 family. Bacterial/plant glycogen synthase subfamily.

The enzyme catalyses [(1-&gt;4)-alpha-D-glucosyl](n) + ADP-alpha-D-glucose = [(1-&gt;4)-alpha-D-glucosyl](n+1) + ADP + H(+). The protein operates within glycan biosynthesis; glycogen biosynthesis. Its function is as follows. Synthesizes alpha-1,4-glucan chains using ADP-glucose. The polypeptide is Glycogen synthase (Rhodospirillum rubrum (strain ATCC 11170 / ATH 1.1.1 / DSM 467 / LMG 4362 / NCIMB 8255 / S1)).